Reading from the N-terminus, the 408-residue chain is Acetate kinase (408 aa).

Asn7 contributes to the Mg(2+) binding site. Lys14 provides a ligand contact to ATP. Residue Arg91 participates in substrate binding. The Proton donor/acceptor role is filled by Asp148. ATP contacts are provided by residues 208-212 and 283-285; these read HLGNG and DLR. Residue Glu388 participates in Mg(2+) binding.

This sequence belongs to the acetokinase family. Homodimer. Requires Mg(2+) as cofactor. The cofactor is Mn(2+).

The protein resides in the cytoplasm. It carries out the reaction acetate + ATP = acetyl phosphate + ADP. Its pathway is metabolic intermediate biosynthesis; acetyl-CoA biosynthesis; acetyl-CoA from acetate: step 1/2. Its function is as follows. Catalyzes the formation of acetyl phosphate from acetate and ATP. Can also catalyze the reverse reaction. In Borrelia hermsii (strain HS1 / DAH), this protein is Acetate kinase.